A 62-amino-acid chain; its full sequence is Translational regulator CsrA (62 aa).

This sequence belongs to the CsrA/RsmA family. In terms of assembly, homodimer; the beta-strands of each monomer intercalate to form a hydrophobic core, while the alpha-helices form wings that extend away from the core.

It localises to the cytoplasm. A key translational regulator that binds mRNA to regulate translation initiation and/or mRNA stability. Mediates global changes in gene expression, shifting from rapid growth to stress survival by linking envelope stress, the stringent response and the catabolite repression systems. Usually binds in the 5'-UTR; binding at or near the Shine-Dalgarno sequence prevents ribosome-binding, repressing translation, binding elsewhere in the 5'-UTR can activate translation and/or stabilize the mRNA. Its function is antagonized by small RNA(s). The chain is Translational regulator CsrA from Pasteurella multocida (strain Pm70).